The following is a 138-amino-acid chain: Large ribosomal subunit protein uL13 (138 aa).

Belongs to the universal ribosomal protein uL13 family. Part of the 50S ribosomal subunit.

In terms of biological role, this protein is one of the early assembly proteins of the 50S ribosomal subunit, although it is not seen to bind rRNA by itself. It is important during the early stages of 50S assembly. This chain is Large ribosomal subunit protein uL13, found in Picrophilus torridus (strain ATCC 700027 / DSM 9790 / JCM 10055 / NBRC 100828 / KAW 2/3).